A 507-amino-acid polypeptide reads, in one-letter code: MGCCQSSFLKPSSLHDKKITSDDLSGRRGKGAKRGNRHRHANINEGRGWHFSDVPDFSEFSASVLRDATNNFNKNAVVSVCSDQEPNLVYQGCIRSDKDKRLIAVKKFSKTTWPDPKQFATEARAIGSLRHVRLVNLIGYCCEGDERLLVSEYMPNESLTKHLFHWEKQTMEWAMRLRVALYVAEALEYCRQSGLKLYHDLNTCRVLFDENGSPRLSCFGWMKNSKDGKNFSTNLAYTPPEYLRSGTLIPESVVFSFGTFLLDLLSGKHIPPSHAVGTIQKQNLNVLMDSHLEGNYPEEDAAMVFDLASKCLHNNPNERPEIGDIISVITTLQQKLDVPSYTMLGISKLEKLEMEHPKSLIYDACHQMDLAALHQILEAMEYKEDEVTCELSFQQWAQQIKDVCNTRQQGDSAFRNKHFESAIDKYTQFIEIGIMISPTVYARRSMCYLFCDQPDAALRDAMQAQCVYSDWPTAFYLQAVALSKLNMVEDSATMLKEALILEDKRGS.

Gly-2 is lipidated: N-myristoyl glycine. Positions 16–26 are enriched in basic and acidic residues; the sequence is DKKITSDDLSG. Residues 16-44 form a disordered region; that stretch reads DKKITSDDLSGRRGKGAKRGNRHRHANIN. Residues 27–41 are compositionally biased toward basic residues; the sequence is RRGKGAKRGNRHRHA. The Protein kinase domain maps to 75 to 332; the sequence is NAVVSVCSDQ…GDIISVITTL (258 aa). Residues 81–89 and Lys-106 each bind ATP; that span reads CSDQEPNLV. The active-site Proton acceptor is the Asp-200.

This sequence belongs to the protein kinase superfamily. Ser/Thr protein kinase family. Interacts with BRI1, ASK7/BIN2, BSK1, BSK6 and BSK8. In terms of processing, phosphorylated by BRI1, ASK7/BIN2 and ASK9/BIL2.

The protein localises to the cell membrane. It catalyses the reaction L-seryl-[protein] + ATP = O-phospho-L-seryl-[protein] + ADP + H(+). The catalysed reaction is L-threonyl-[protein] + ATP = O-phospho-L-threonyl-[protein] + ADP + H(+). In terms of biological role, probable serine/threonine kinase that acts as a positive regulator of brassinosteroid (BR) signaling downstream of the receptor kinase BRI1. This Arabidopsis thaliana (Mouse-ear cress) protein is Serine/threonine-protein kinase BSK11.